Here is a 99-residue protein sequence, read N- to C-terminus: Microcin E492 (99 aa).

Residues 1-15 (MREISQKDLNLAFGA) form the signal peptide. The segment at 80–99 (SWNGSGSGYNSATSSSGSGS) is disordered. Positions 87–99 (GYNSATSSSGSGS) are enriched in low complexity. Position 99 is a serine microcin E492 siderophore ester (S99).

This sequence belongs to the class IIa microcin family. In terms of assembly, multimer. Possibly forms a homodimer or a homotrimer. In terms of processing, the C-terminal Ser is modified by attachment to a siderophore similar to enterobactin, which can bind one atom of iron. The modification consists of an ester linkage of the serine carboxyl to O6 of a glucose which is linked by a C-glycosidic bond to the 5'-benzoyl of a linear triester of N-(2,3-dihydroxybenzoyl)serine. Presence of the siderophore ester increases the antibacterial activity of the protein.

In terms of biological role, channel-forming bacteriocin. Forms cation-selective channels. Active on enterobacteria, with highest activity against E.coli. Not active on other Gram-negative bacteria, Gram-positive bacteria or fungi. The unmodified protein is active against E.coli and S.enteritidis. When the siderophore ester is present at Ser-99, antibacterial activity against these species is increased and activity is also detected against E.cloacae and K.pneumoniae. Neutralized by its immunity protein MceB. This Klebsiella pneumoniae protein is Microcin E492.